The sequence spans 447 residues: Probable alpha-galactosidase B (447 aa).

The first 25 residues, 1 to 25, serve as a signal peptide directing secretion; that stretch reads MTTFFSLTTAAAVLTLARGSNALVR. 2 disulfide bridges follow: C45–C77 and C127–C157. The Nucleophile role is filled by D155. N162 and N180 each carry an N-linked (GlcNAc...) asparagine glycan. Position 225–229 (225–229) interacts with substrate; sequence EWGQA. N236 carries N-linked (GlcNAc...) asparagine glycosylation. Residue D247 is the Proton donor of the active site. N286 carries N-linked (GlcNAc...) asparagine glycosylation.

It belongs to the glycosyl hydrolase 27 family.

It is found in the secreted. The enzyme catalyses Hydrolysis of terminal, non-reducing alpha-D-galactose residues in alpha-D-galactosides, including galactose oligosaccharides, galactomannans and galactolipids.. Its function is as follows. Hydrolyzes a variety of simple alpha-D-galactoside as well as more complex molecules such as oligosaccharides and polysaccharides. In Aspergillus fumigatus (strain ATCC MYA-4609 / CBS 101355 / FGSC A1100 / Af293) (Neosartorya fumigata), this protein is Probable alpha-galactosidase B (aglB).